Reading from the N-terminus, the 349-residue chain is MLDLSLPSGLRDLLPDHSAHLAELSSKLHDVFSRFGYRRVFLPTLERLDVVERGLSPAALADVMKFVEPGSGEVVAIRPDITPQIARLYAARPDALPSPARLCYDGPVLRAREARAGRPREVYQAGVELLGAGGASADAEALVLLARSLERVGLKAPRVEVGHARFAEAVMEAARLPQRLRSAAWEALSRKDRAALGAAAAKGRGSSEAREAVPQLAGLFGDGALDRARAIARAVPGAAAPLAETEAALRIARRRGVREVAVDLGEARGLGYYTGITFAGYAPGAGAAVARGGRYDGLLARFGRPGPAIGFAVDLEFATQALERANGRGRGVRPRRASARGGRAGTRPR.

Residues 325–349 (ANGRGRGVRPRRASARGGRAGTRPR) are disordered. The segment covering 339-349 (ARGGRAGTRPR) has biased composition (low complexity).

Belongs to the class-II aminoacyl-tRNA synthetase family. HisZ subfamily. Heteromultimer composed of HisG and HisZ subunits.

It is found in the cytoplasm. It participates in amino-acid biosynthesis; L-histidine biosynthesis; L-histidine from 5-phospho-alpha-D-ribose 1-diphosphate: step 1/9. Required for the first step of histidine biosynthesis. May allow the feedback regulation of ATP phosphoribosyltransferase activity by histidine. The sequence is that of ATP phosphoribosyltransferase regulatory subunit from Anaeromyxobacter dehalogenans (strain 2CP-C).